The chain runs to 343 residues: Ribosomal RNA small subunit methyltransferase C (343 aa).

It belongs to the methyltransferase superfamily. RsmC family. In terms of assembly, monomer.

Its subcellular location is the cytoplasm. It carries out the reaction guanosine(1207) in 16S rRNA + S-adenosyl-L-methionine = N(2)-methylguanosine(1207) in 16S rRNA + S-adenosyl-L-homocysteine + H(+). Specifically methylates the guanine in position 1207 of 16S rRNA in the 30S particle. This chain is Ribosomal RNA small subunit methyltransferase C, found in Escherichia coli O1:K1 / APEC.